We begin with the raw amino-acid sequence, 105 residues long: Nucleoid-associated protein Dred_0043 (105 aa).

The protein belongs to the YbaB/EbfC family. In terms of assembly, homodimer.

The protein localises to the cytoplasm. It localises to the nucleoid. Its function is as follows. Binds to DNA and alters its conformation. May be involved in regulation of gene expression, nucleoid organization and DNA protection. This chain is Nucleoid-associated protein Dred_0043, found in Desulforamulus reducens (strain ATCC BAA-1160 / DSM 100696 / MI-1) (Desulfotomaculum reducens).